We begin with the raw amino-acid sequence, 338 residues long: Eukaryotic translation initiation factor 3 subunit H (338 aa).

The MPN domain occupies 22 to 154 (VQCDGLAVMK…LKAYRLTPQA (133 aa)).

Belongs to the eIF-3 subunit H family. In terms of assembly, component of the eukaryotic translation initiation factor 3 (eIF-3) complex. The eIF-3 complex interacts with pix. Interacts with mxt.

Its subcellular location is the cytoplasm. In terms of biological role, component of the eukaryotic translation initiation factor 3 (eIF-3) complex, which is involved in protein synthesis of a specialized repertoire of mRNAs and, together with other initiation factors, stimulates binding of mRNA and methionyl-tRNAi to the 40S ribosome. The eIF-3 complex specifically targets and initiates translation of a subset of mRNAs involved in cell proliferation. In Drosophila melanogaster (Fruit fly), this protein is Eukaryotic translation initiation factor 3 subunit H.